Here is a 303-residue protein sequence, read N- to C-terminus: 2-dehydropantoate 2-reductase (303 aa).

NADP(+) is bound by residues Gly-7–Gly-12, Lys-78, Asn-103, and Ala-129. Lys-185 (proton donor) is an active-site residue. Residues Lys-185, Asn-189, Asn-193, Asn-203, and Asn-252 to Ser-255 each bind substrate. Glu-267 serves as a coordination point for NADP(+).

This sequence belongs to the ketopantoate reductase family.

It is found in the cytoplasm. The catalysed reaction is (R)-pantoate + NAD(+) = 2-dehydropantoate + NADH + H(+). The enzyme catalyses (R)-pantoate + NADP(+) = 2-dehydropantoate + NADPH + H(+). Its pathway is cofactor biosynthesis; coenzyme A biosynthesis. Its function is as follows. Catalyzes the NAD(P)H-dependent reduction of ketopantoate into pantoic acid. This is 2-dehydropantoate 2-reductase from Halobacterium salinarum (strain ATCC 700922 / JCM 11081 / NRC-1) (Halobacterium halobium).